The following is a 63-amino-acid chain: Cytochrome c oxidase subunit 7C, mitochondrial (63 aa).

A mitochondrion-targeting transit peptide spans 1 to 16 (MLGQSIRRFTTSVVRR). The Mitochondrial matrix segment spans residues 17–33 (SHYEEGPGKNLPFSVEN). The residue at position 25 (Lys25) is an N6-acetyllysine; alternate. Position 25 is an N6-succinyllysine; alternate (Lys25). A helical transmembrane segment spans residues 34–60 (KWSLLAKMCLYFGSAFATPFLVVRHQL). The Mitochondrial intermembrane portion of the chain corresponds to 61-63 (LKT).

It belongs to the cytochrome c oxidase VIIc family. As to quaternary structure, component of the cytochrome c oxidase (complex IV, CIV), a multisubunit enzyme composed of 14 subunits. The complex is composed of a catalytic core of 3 subunits MT-CO1, MT-CO2 and MT-CO3, encoded in the mitochondrial DNA, and 11 supernumerary subunits COX4I1 (or COX4I2), COX5A, COX5B, COX6A1 (or COX6A2), COX6B1 (or COX6B2), COX6C, COX7A2 (or COX7A1), COX7B, COX7C, COX8A and NDUFA4, which are encoded in the nuclear genome. The complex exists as a monomer or a dimer and forms supercomplexes (SCs) in the inner mitochondrial membrane with NADH-ubiquinone oxidoreductase (complex I, CI) and ubiquinol-cytochrome c oxidoreductase (cytochrome b-c1 complex, complex III, CIII), resulting in different assemblies (supercomplex SCI(1)III(2)IV(1) and megacomplex MCI(2)III(2)IV(2)). Interacts with RAB5IF.

Its subcellular location is the mitochondrion inner membrane. The protein operates within energy metabolism; oxidative phosphorylation. Component of the cytochrome c oxidase, the last enzyme in the mitochondrial electron transport chain which drives oxidative phosphorylation. The respiratory chain contains 3 multisubunit complexes succinate dehydrogenase (complex II, CII), ubiquinol-cytochrome c oxidoreductase (cytochrome b-c1 complex, complex III, CIII) and cytochrome c oxidase (complex IV, CIV), that cooperate to transfer electrons derived from NADH and succinate to molecular oxygen, creating an electrochemical gradient over the inner membrane that drives transmembrane transport and the ATP synthase. Cytochrome c oxidase is the component of the respiratory chain that catalyzes the reduction of oxygen to water. Electrons originating from reduced cytochrome c in the intermembrane space (IMS) are transferred via the dinuclear copper A center (CU(A)) of subunit 2 and heme A of subunit 1 to the active site in subunit 1, a binuclear center (BNC) formed by heme A3 and copper B (CU(B)). The BNC reduces molecular oxygen to 2 water molecules using 4 electrons from cytochrome c in the IMS and 4 protons from the mitochondrial matrix. The sequence is that of Cytochrome c oxidase subunit 7C, mitochondrial (COX7C) from Homo sapiens (Human).